The primary structure comprises 611 residues: Chaperone protein DnaK (611 aa).

Position 173 is a phosphothreonine; by autocatalysis (Thr173). Residues Ala577–Gly591 show a composition bias toward low complexity. Residues Ala577–Lys611 form a disordered region. The segment covering Val599 to Lys611 has biased composition (acidic residues).

The protein belongs to the heat shock protein 70 family.

Acts as a chaperone. The protein is Chaperone protein DnaK of Lysinibacillus sphaericus (strain C3-41).